A 272-amino-acid polypeptide reads, in one-letter code: uncharacterized protein (272 aa).

This is an uncharacterized protein from Saccharomyces cerevisiae (strain ATCC 204508 / S288c) (Baker's yeast).